We begin with the raw amino-acid sequence, 213 residues long: Probable nicotinate-nucleotide adenylyltransferase (213 aa).

The protein belongs to the NadD family.

The catalysed reaction is nicotinate beta-D-ribonucleotide + ATP + H(+) = deamido-NAD(+) + diphosphate. The protein operates within cofactor biosynthesis; NAD(+) biosynthesis; deamido-NAD(+) from nicotinate D-ribonucleotide: step 1/1. Its function is as follows. Catalyzes the reversible adenylation of nicotinate mononucleotide (NaMN) to nicotinic acid adenine dinucleotide (NaAD). This Shigella boydii serotype 18 (strain CDC 3083-94 / BS512) protein is Probable nicotinate-nucleotide adenylyltransferase.